A 1347-amino-acid polypeptide reads, in one-letter code: Protocadherin-11 X-linked (1347 aa).

An N-terminal signal peptide occupies residues Met1–Ala23. Over Gln24–Lys812 the chain is Extracellular. 7 Cadherin domains span residues Lys26 to Phe139, Pro140 to Phe249, Lys250 to Ile355, Asn362 to Phe466, Thr467 to Phe570, Thr571 to Phe673, and Pro677 to Thr795. 3 N-linked (GlcNAc...) asparagine glycosylation sites follow: Asn27, Asn48, and Asn54. A glycan (N-linked (GlcNAc...) asparagine) is linked at Asn344. Asn553 carries an N-linked (GlcNAc...) asparagine glycan. Asn773 carries N-linked (GlcNAc...) asparagine glycosylation. Residues Ile813–Val833 form a helical membrane-spanning segment. The Cytoplasmic segment spans residues Val834–Leu1347. 3 disordered regions span residues Leu1057 to Gln1091, Arg1097 to Phe1116, and Thr1325 to Leu1347.

Its subcellular location is the cell membrane. Potential calcium-dependent cell-adhesion protein. This Pan troglodytes (Chimpanzee) protein is Protocadherin-11 X-linked (PCDH11X).